We begin with the raw amino-acid sequence, 142 residues long: uncharacterized protein (142 aa).

In terms of domain architecture, N-acetyltransferase spans 2–142; sequence IHMKQLTSKE…IESYLFRKPV (141 aa).

It belongs to the acetyltransferase family.

This is an uncharacterized protein from Bacillus subtilis (strain 168).